Here is a 136-residue protein sequence, read N- to C-terminus: Small ribosomal subunit protein uS19 (136 aa).

Residues 114 to 136 (RSRVSHGSAGVGATRSSKFVPLK) form a disordered region.

The protein belongs to the universal ribosomal protein uS19 family.

In terms of biological role, protein S19 forms a complex with S13 that binds strongly to the 16S ribosomal RNA. This is Small ribosomal subunit protein uS19 from Methanosarcina acetivorans (strain ATCC 35395 / DSM 2834 / JCM 12185 / C2A).